Here is a 295-residue protein sequence, read N- to C-terminus: Ribosomal RNA small subunit methyltransferase A (295 aa).

6 residues coordinate S-adenosyl-L-methionine: Asn-29, Leu-31, Gly-56, Glu-77, Asp-102, and Asn-128.

This sequence belongs to the class I-like SAM-binding methyltransferase superfamily. rRNA adenine N(6)-methyltransferase family. RsmA subfamily.

The protein resides in the cytoplasm. The catalysed reaction is adenosine(1518)/adenosine(1519) in 16S rRNA + 4 S-adenosyl-L-methionine = N(6)-dimethyladenosine(1518)/N(6)-dimethyladenosine(1519) in 16S rRNA + 4 S-adenosyl-L-homocysteine + 4 H(+). Its function is as follows. Specifically dimethylates two adjacent adenosines (A1518 and A1519) in the loop of a conserved hairpin near the 3'-end of 16S rRNA in the 30S particle. May play a critical role in biogenesis of 30S subunits. In Listeria monocytogenes serovar 1/2a (strain ATCC BAA-679 / EGD-e), this protein is Ribosomal RNA small subunit methyltransferase A.